Consider the following 329-residue polypeptide: Sulfate-binding protein (329 aa).

The N-terminal stretch at 1 to 19 (MKKWGVGFTLLLASTSILA) is a signal peptide.

Belongs to the prokaryotic sulfate-binding protein family.

Its subcellular location is the periplasm. Functionally, this protein specifically binds sulfate and is involved in its transmembrane transport. The sequence is that of Sulfate-binding protein (sbp) from Salmonella typhimurium (strain LT2 / SGSC1412 / ATCC 700720).